Consider the following 482-residue polypeptide: Malvidin galactosylase UGT88C3 (482 aa).

His-16 acts as the Proton acceptor in catalysis. Asp-117 functions as the Charge relay in the catalytic mechanism. The UDP site is built by Ser-279, Trp-345, Ala-349, His-366, Asn-370, Ser-371, and Glu-374.

This sequence belongs to the UDP-glycosyltransferase family. In terms of tissue distribution, highly expressed in leaves, sheaths, pistils and embryos, observed in stems, stem nodes and panicles, and present at low levels in roots.

It is found in the endoplasmic reticulum. Its subcellular location is the nucleus. The enzyme catalyses malvidin + UDP-alpha-D-galactose = malvidin 3-O-beta-D-galactoside + UDP + H(+). It functions in the pathway pigment biosynthesis; anthocyanin biosynthesis. UDP-glycosyltransferase which uses UDP-galactose and malvidin as substrates to catalyze the biosynthesis of malvidin 3-O-galactoside, an anthocyanin conferring purple pigmentation. The sequence is that of Malvidin galactosylase UGT88C3 from Oryza sativa subsp. japonica (Rice).